Reading from the N-terminus, the 553-residue chain is Urocanate hydratase (553 aa).

Residues 45-46 (GG), glutamine 123, 169-171 (GMG), aspartate 189, arginine 194, 235-236 (NA), 256-260 (QTSAH), 266-267 (YV), tyrosine 315, and glycine 485 each bind NAD(+).

The protein belongs to the urocanase family. NAD(+) serves as cofactor.

The protein resides in the cytoplasm. The catalysed reaction is 4-imidazolone-5-propanoate = trans-urocanate + H2O. It functions in the pathway amino-acid degradation; L-histidine degradation into L-glutamate; N-formimidoyl-L-glutamate from L-histidine: step 2/3. Functionally, catalyzes the conversion of urocanate to 4-imidazolone-5-propionate. The polypeptide is Urocanate hydratase (Staphylococcus aureus (strain Mu50 / ATCC 700699)).